A 116-amino-acid chain; its full sequence is NADH-ubiquinone oxidoreductase chain 3 (116 aa).

Transmembrane regions (helical) follow at residues 10–30 (FLTL…TFAA), 64–84 (FFLV…LFPL), and 88–108 (VFFH…FEWV).

This sequence belongs to the complex I subunit 3 family.

The protein resides in the mitochondrion membrane. The enzyme catalyses a ubiquinone + NADH + 5 H(+)(in) = a ubiquinol + NAD(+) + 4 H(+)(out). Functionally, core subunit of the mitochondrial membrane respiratory chain NADH dehydrogenase (Complex I) that is believed to belong to the minimal assembly required for catalysis. Complex I functions in the transfer of electrons from NADH to the respiratory chain. The immediate electron acceptor for the enzyme is believed to be ubiquinone. The chain is NADH-ubiquinone oxidoreductase chain 3 (ND3) from Patiria pectinifera (Starfish).